We begin with the raw amino-acid sequence, 76 residues long: Small ribosomal subunit protein bS16 (76 aa).

It belongs to the bacterial ribosomal protein bS16 family.

This is Small ribosomal subunit protein bS16 from Helicobacter acinonychis (strain Sheeba).